A 137-amino-acid chain; its full sequence is Large ribosomal subunit protein uL16 (137 aa).

Belongs to the universal ribosomal protein uL16 family. In terms of assembly, part of the 50S ribosomal subunit.

In terms of biological role, binds 23S rRNA and is also seen to make contacts with the A and possibly P site tRNAs. The protein is Large ribosomal subunit protein uL16 of Tolumonas auensis (strain DSM 9187 / NBRC 110442 / TA 4).